The following is a 199-amino-acid chain: Small ribosomal subunit protein uS7 (199 aa).

The protein belongs to the universal ribosomal protein uS7 family. As to quaternary structure, part of the 30S ribosomal subunit.

Its function is as follows. One of the primary rRNA binding proteins, it binds directly to 16S rRNA where it nucleates assembly of the head domain of the 30S subunit. Is located at the subunit interface close to the decoding center. The protein is Small ribosomal subunit protein uS7 of Cenarchaeum symbiosum (strain A).